Consider the following 252-residue polypeptide: Imidazole glycerol phosphate synthase subunit HisF (252 aa).

Catalysis depends on residues aspartate 11 and aspartate 130.

It belongs to the HisA/HisF family. As to quaternary structure, heterodimer of HisH and HisF.

It localises to the cytoplasm. It carries out the reaction 5-[(5-phospho-1-deoxy-D-ribulos-1-ylimino)methylamino]-1-(5-phospho-beta-D-ribosyl)imidazole-4-carboxamide + L-glutamine = D-erythro-1-(imidazol-4-yl)glycerol 3-phosphate + 5-amino-1-(5-phospho-beta-D-ribosyl)imidazole-4-carboxamide + L-glutamate + H(+). Its pathway is amino-acid biosynthesis; L-histidine biosynthesis; L-histidine from 5-phospho-alpha-D-ribose 1-diphosphate: step 5/9. In terms of biological role, IGPS catalyzes the conversion of PRFAR and glutamine to IGP, AICAR and glutamate. The HisF subunit catalyzes the cyclization activity that produces IGP and AICAR from PRFAR using the ammonia provided by the HisH subunit. This Azobacteroides pseudotrichonymphae genomovar. CFP2 protein is Imidazole glycerol phosphate synthase subunit HisF.